The sequence spans 132 residues: MKKHGILNSDLAKIVDDLGHTDRVCIGDLGLPIPSGVRKIDLSLKAGFPSFQDLLDVYLEHVLVEKIILAEEIKEQNPEQLSQILRKLDDGVTVEYVSHEQLKALNQDVKAVIRTGENTPYSNIILQSGVTI.

The active-site Proton donor is the His20. Substrate-binding positions include Asp28, His99, and 121–123 (YSN).

The protein belongs to the RbsD / FucU family. RbsD subfamily. Homodecamer.

It localises to the cytoplasm. It catalyses the reaction beta-D-ribopyranose = beta-D-ribofuranose. It functions in the pathway carbohydrate metabolism; D-ribose degradation; D-ribose 5-phosphate from beta-D-ribopyranose: step 1/2. Functionally, catalyzes the interconversion of beta-pyran and beta-furan forms of D-ribose. The sequence is that of D-ribose pyranase from Streptococcus uberis (strain ATCC BAA-854 / 0140J).